The following is a 315-amino-acid chain: Protein OPG185 (315 aa).

A signal peptide spans 1 to 16 (MTRLPILLLLISLVYA). Positions 17–121 (TPFPQTSKKI…NDTDKVDYEE (105 aa)) constitute an Ig-like V-type domain. Residues 17-279 (TPFPQTSKKI…SNYKTKDFVE (263 aa)) lie on the Virion surface side of the membrane. Residues Cys34 and Cys103 are joined by a disulfide bond. 4 N-linked (GlcNAc...) asparagine; by host glycosylation sites follow: Asn37, Asn69, Asn112, and Asn161. Residues 191-202 (SINTVSASSGES) are compositionally biased toward polar residues. The interval 191–213 (SINTVSASSGESTTDETPEPITD) is disordered. Asn254 is a glycosylation site (N-linked (GlcNAc...) asparagine; by host). The chain crosses the membrane as a helical span at residues 280–303 (IFGITALIILSAVAIFCITYYIYN). Over 304–315 (KRSRKYKTENKV) the chain is Intravirion.

Belongs to the orthopoxvirus OPG185 family. In terms of assembly, heterodimerizes with OPG040. The heterodimer OPG185-OPG040 interacts with components of the entry fusion complex OPG143 and OPG094. Heterodimer with C3/VPC protein; disulfide-linked. In terms of processing, glycosylated; contains phosphate and sulfate-substituted glycans. O-glycosylation is required for hemagglutination and hemadsorption activities of infected cell membranes.

The protein localises to the virion membrane. It localises to the host membrane. Its function is as follows. Prevents cell to cell fusion by interacting with and directing the viral OPG040 protein on the host plasma membrane. The OPG185-OPG040 complex associates with components of the entry fusion complex (EFC) presumably to avoid superinfection and syncytium formation. Via its interaction with C3/VCP protein, protects the infected cell and probably also the extracellular enveloped virus from complement attack. This is Protein OPG185 (OPG185) from Homo sapiens (Human).